We begin with the raw amino-acid sequence, 500 residues long: Protein PIGMENT DEFECTIVE 338, chloroplastic (500 aa).

The transit peptide at 1 to 63 directs the protein to the chloroplast; the sequence is MQTLLCQPCK…FAFRGFSICR (63 aa). S1 motif domains are found at residues 156 to 265, 283 to 351, and 362 to 431; these read KPGD…LSSR, NEPI…LSEK, and GTLL…LSIA.

Belongs to the bacterial ribosomal protein bS1 family. Interacts with CRP1 and PRFB3. As to expression, present in leaves (at protein level). Confined to leaf chlorenchyma cells.

It is found in the plastid. The protein resides in the chloroplast. In terms of biological role, RNA-binding protein that acts as an RNA chaperone to remodel RNA structure and activates their translation. Required for seed pigmentation. Necessary for chloroplast development and subsequent photosynthetic electron flow, as well as for non-photochemical quenching (NPQ). Rubisco regulatory factor which regulates the concerted biogenesis of NDH, PSI (including PsaA, PsaB, PsaD, PsaF, PsaL, PsaG, PsaK and NdhH) and Cytb(6)f (including PetA, PetB, PetC and PetD) complexes. Binds specifically to and involved in the post-transcriptional regulation of plastid-encoded mRNAs (e.g. rbcL, petA, petB, petD and Ycf1), thus modulating expression, cellular localization/compartmentalization, and photosynthetic function. This chain is Protein PIGMENT DEFECTIVE 338, chloroplastic, found in Arabidopsis thaliana (Mouse-ear cress).